Here is a 99-residue protein sequence, read N- to C-terminus: MICOS complex subunit MIC10 (99 aa).

Transmembrane regions (helical) follow at residues 27–43 (RFVY…LLFF) and 50–66 (WASI…SAYT).

This sequence belongs to the MICOS complex subunit Mic10 family. In terms of assembly, component of the mitochondrial contact site and cristae organizing system (MICOS) complex. The MICOS complex associates with mitochondrial outer membrane proteins. Present in a large lipid-enriched complex called mitochondrial transmembrane lipoprotein (MTL) complex made of proteins located in the two mitochondrial membranes, including the TOM complex and the core components of the MICOS complex and containing at least digalactosyldiacylglycerol (DGDG).

The protein localises to the mitochondrion inner membrane. Its function is as follows. Component of the MICOS complex, a large protein complex of the mitochondrial inner membrane that plays crucial roles in the maintenance of crista junctions, inner membrane architecture, and formation of contact sites to the outer membrane. The polypeptide is MICOS complex subunit MIC10 (Arabidopsis thaliana (Mouse-ear cress)).